We begin with the raw amino-acid sequence, 248 residues long: UPF0736 protein BcerKBAB4_1085 (248 aa).

This sequence belongs to the UPF0736 family.

This Bacillus mycoides (strain KBAB4) (Bacillus weihenstephanensis) protein is UPF0736 protein BcerKBAB4_1085.